Here is a 180-residue protein sequence, read N- to C-terminus: ATP-dependent protease subunit HslV (180 aa).

T7 is a catalytic residue. Positions 165, 168, and 171 each coordinate Na(+).

The protein belongs to the peptidase T1B family. HslV subfamily. In terms of assembly, a double ring-shaped homohexamer of HslV is capped on each side by a ring-shaped HslU homohexamer. The assembly of the HslU/HslV complex is dependent on binding of ATP.

Its subcellular location is the cytoplasm. The catalysed reaction is ATP-dependent cleavage of peptide bonds with broad specificity.. Its activity is regulated as follows. Allosterically activated by HslU binding. Functionally, protease subunit of a proteasome-like degradation complex believed to be a general protein degrading machinery. This chain is ATP-dependent protease subunit HslV, found in Bacillus cereus (strain ATCC 10987 / NRS 248).